The following is a 317-amino-acid chain: tRNA dimethylallyltransferase (317 aa).

14–21 contributes to the ATP binding site; the sequence is GPTASGKS. Residue 16 to 21 coordinates substrate; sequence TASGKS. Interaction with substrate tRNA stretches follow at residues 39–42 and 163–167; these read DSVL and QRIQR.

The protein belongs to the IPP transferase family. Monomer. The cofactor is Mg(2+).

The enzyme catalyses adenosine(37) in tRNA + dimethylallyl diphosphate = N(6)-dimethylallyladenosine(37) in tRNA + diphosphate. Catalyzes the transfer of a dimethylallyl group onto the adenine at position 37 in tRNAs that read codons beginning with uridine, leading to the formation of N6-(dimethylallyl)adenosine (i(6)A). This is tRNA dimethylallyltransferase from Xylella fastidiosa (strain 9a5c).